The sequence spans 385 residues: Probable dual-specificity RNA methyltransferase RlmN (385 aa).

Residues 1–24 are disordered; the sequence is MTATTAESGNLLPLVSGRSRPPRH. Glu-114 (proton acceptor) is an active-site residue. Residues 120–364 enclose the Radical SAM core domain; sequence YPQRATVCVS…AATVRDTRGR (245 aa). Cys-127 and Cys-370 are joined by a disulfide. Residues Cys-134, Cys-138, and Cys-141 each coordinate [4Fe-4S] cluster. S-adenosyl-L-methionine-binding positions include 194 to 195, Ser-228, 251 to 253, and Asn-327; these read GE and SLH. The active-site S-methylcysteine intermediate is the Cys-370.

The protein belongs to the radical SAM superfamily. RlmN family. The cofactor is [4Fe-4S] cluster.

The protein localises to the cytoplasm. The catalysed reaction is adenosine(2503) in 23S rRNA + 2 reduced [2Fe-2S]-[ferredoxin] + 2 S-adenosyl-L-methionine = 2-methyladenosine(2503) in 23S rRNA + 5'-deoxyadenosine + L-methionine + 2 oxidized [2Fe-2S]-[ferredoxin] + S-adenosyl-L-homocysteine. It catalyses the reaction adenosine(37) in tRNA + 2 reduced [2Fe-2S]-[ferredoxin] + 2 S-adenosyl-L-methionine = 2-methyladenosine(37) in tRNA + 5'-deoxyadenosine + L-methionine + 2 oxidized [2Fe-2S]-[ferredoxin] + S-adenosyl-L-homocysteine. In terms of biological role, specifically methylates position 2 of adenine 2503 in 23S rRNA and position 2 of adenine 37 in tRNAs. This is Probable dual-specificity RNA methyltransferase RlmN from Parafrankia sp. (strain EAN1pec).